We begin with the raw amino-acid sequence, 293 residues long: MKIRIAARGSKLSRIQVDMLGEKLKKIGIEYEIIDIKTKADLFSTEPLSKLGKGVFEKEVNEAVLEGKADIAVHSMKDILSEINPSLEIFAVLERDPPYDILIAEKNLDKLDSNITIGTSSIRRKNFLKYIKPEINTKDIRGNVDTRIRKYLSKEYQGLILAEASLKRLNMTMNYHRLNVYDFTPEANQGIIVALGRKKDEKIKEIFKEINHKDTLDEALAERAVISLVGGGCHSPIGVLFKKEGKEFYGIASYSDGKKKITVSISKPGDPYTIGSELGLLLKKEMKNEDIIP.

C233 is subject to S-(dipyrrolylmethanemethyl)cysteine.

The protein belongs to the HMBS family. Dipyrromethane serves as cofactor.

It catalyses the reaction 4 porphobilinogen + H2O = hydroxymethylbilane + 4 NH4(+). The protein operates within porphyrin-containing compound metabolism; protoporphyrin-IX biosynthesis; coproporphyrinogen-III from 5-aminolevulinate: step 2/4. Its function is as follows. Tetrapolymerization of the monopyrrole PBG into the hydroxymethylbilane pre-uroporphyrinogen in several discrete steps. This Saccharolobus islandicus (strain L.S.2.15 / Lassen #1) (Sulfolobus islandicus) protein is Probable porphobilinogen deaminase.